A 585-amino-acid chain; its full sequence is Squalene epoxidase 2, mitochondrial (585 aa).

The N-terminal 45 residues, 1-45 (MKPFVIRNLPRFQSTLRSSLLYTNHRPSSRFSLSTRRFTTGATYI), are a transit peptide targeting the mitochondrion. The helical transmembrane segment at 70–90 (AKIALDQFIASLFTFLLLYIL) threads the bilayer. FAD contacts are provided by residues 132 to 133 (VA), 152 to 153 (ER), Arg-160, Arg-231, Val-247, Asp-409, and Met-422. A run of 3 helical transmembrane segments spans residues 493–513 (FDYLSLGGVFSSGPVALLSGL), 520–540 (LVLHFFAVAIYAVCRLMLPFP), and 545–565 (FWLGARIISSASSIIFPIIKA).

The protein belongs to the squalene monooxygenase family. FAD serves as cofactor. As to expression, expressed mainly in inflorescences. Detected in seedlings, leaves, stems, and siliques.

It localises to the mitochondrion membrane. The enzyme catalyses squalene + reduced [NADPH--hemoprotein reductase] + O2 = (S)-2,3-epoxysqualene + oxidized [NADPH--hemoprotein reductase] + H2O + H(+). It participates in terpene metabolism; lanosterol biosynthesis; lanosterol from farnesyl diphosphate: step 2/3. Catalyzes the stereospecific oxidation of squalene to (S)-2,3-epoxysqualene, and is considered to be a rate-limiting enzyme in steroid biosynthesis. Produces primarily oxidosqualene. This Arabidopsis thaliana (Mouse-ear cress) protein is Squalene epoxidase 2, mitochondrial (SQE2).